We begin with the raw amino-acid sequence, 560 residues long: Oxygen-dependent choline dehydrogenase (560 aa).

6 to 35 provides a ligand contact to FAD; the sequence is DYIIVGAGSAGCVLADRLSESGDHSVLLLE. The Proton acceptor role is filled by His-470.

The protein belongs to the GMC oxidoreductase family. FAD is required as a cofactor.

The enzyme catalyses choline + A = betaine aldehyde + AH2. The catalysed reaction is betaine aldehyde + NAD(+) + H2O = glycine betaine + NADH + 2 H(+). Its pathway is amine and polyamine biosynthesis; betaine biosynthesis via choline pathway; betaine aldehyde from choline (cytochrome c reductase route): step 1/1. Involved in the biosynthesis of the osmoprotectant glycine betaine. Catalyzes the oxidation of choline to betaine aldehyde and betaine aldehyde to glycine betaine at the same rate. This chain is Oxygen-dependent choline dehydrogenase, found in Vibrio vulnificus (strain YJ016).